Here is a 198-residue protein sequence, read N- to C-terminus: Small ribosomal subunit protein uS4 (198 aa).

In terms of domain architecture, S4 RNA-binding spans 88–153; sequence LRLDNVMFRM…AQRYKDILEV (66 aa).

The protein belongs to the universal ribosomal protein uS4 family. Part of the 30S ribosomal subunit. Contacts protein S5. The interaction surface between S4 and S5 is involved in control of translational fidelity.

Functionally, one of the primary rRNA binding proteins, it binds directly to 16S rRNA where it nucleates assembly of the body of the 30S subunit. With S5 and S12 plays an important role in translational accuracy. The polypeptide is Small ribosomal subunit protein uS4 (Lachnoclostridium phytofermentans (strain ATCC 700394 / DSM 18823 / ISDg) (Clostridium phytofermentans)).